Here is a 727-residue protein sequence, read N- to C-terminus: 1,4-alpha-glucan branching enzyme GlgB (727 aa).

Residue Asp-405 is the Nucleophile of the active site. Glu-458 (proton donor) is an active-site residue.

It belongs to the glycosyl hydrolase 13 family. GlgB subfamily. As to quaternary structure, monomer.

It catalyses the reaction Transfers a segment of a (1-&gt;4)-alpha-D-glucan chain to a primary hydroxy group in a similar glucan chain.. It functions in the pathway glycan biosynthesis; glycogen biosynthesis. Functionally, catalyzes the formation of the alpha-1,6-glucosidic linkages in glycogen by scission of a 1,4-alpha-linked oligosaccharide from growing alpha-1,4-glucan chains and the subsequent attachment of the oligosaccharide to the alpha-1,6 position. The polypeptide is 1,4-alpha-glucan branching enzyme GlgB (Yersinia enterocolitica serotype O:8 / biotype 1B (strain NCTC 13174 / 8081)).